The sequence spans 421 residues: Serine--tRNA ligase (421 aa).

An L-serine-binding site is contributed by 230–232 (TAE). Residue 259-261 (RRE) participates in ATP binding. Glu-282 contributes to the L-serine binding site. 346–349 (EISS) provides a ligand contact to ATP. Ser-380 is a binding site for L-serine.

This sequence belongs to the class-II aminoacyl-tRNA synthetase family. Type-1 seryl-tRNA synthetase subfamily. As to quaternary structure, homodimer. The tRNA molecule binds across the dimer.

The protein resides in the cytoplasm. It carries out the reaction tRNA(Ser) + L-serine + ATP = L-seryl-tRNA(Ser) + AMP + diphosphate + H(+). The catalysed reaction is tRNA(Sec) + L-serine + ATP = L-seryl-tRNA(Sec) + AMP + diphosphate + H(+). It participates in aminoacyl-tRNA biosynthesis; selenocysteinyl-tRNA(Sec) biosynthesis; L-seryl-tRNA(Sec) from L-serine and tRNA(Sec): step 1/1. Functionally, catalyzes the attachment of serine to tRNA(Ser). Is also able to aminoacylate tRNA(Sec) with serine, to form the misacylated tRNA L-seryl-tRNA(Sec), which will be further converted into selenocysteinyl-tRNA(Sec). This Methanosarcina acetivorans (strain ATCC 35395 / DSM 2834 / JCM 12185 / C2A) protein is Serine--tRNA ligase.